Reading from the N-terminus, the 184-residue chain is Glutathione-regulated potassium-efflux system ancillary protein KefG (184 aa).

Belongs to the NAD(P)H dehydrogenase (quinone) family. KefG subfamily. In terms of assembly, interacts with KefB.

It is found in the cell inner membrane. It carries out the reaction a quinone + NADH + H(+) = a quinol + NAD(+). The catalysed reaction is a quinone + NADPH + H(+) = a quinol + NADP(+). Regulatory subunit of a potassium efflux system that confers protection against electrophiles. Required for full activity of KefB. This Shigella dysenteriae serotype 1 (strain Sd197) protein is Glutathione-regulated potassium-efflux system ancillary protein KefG.